Here is a 99-residue protein sequence, read N- to C-terminus: Small ribosomal subunit protein bS20 (99 aa).

It belongs to the bacterial ribosomal protein bS20 family.

In terms of biological role, binds directly to 16S ribosomal RNA. This is Small ribosomal subunit protein bS20 from Caldicellulosiruptor saccharolyticus (strain ATCC 43494 / DSM 8903 / Tp8T 6331).